Consider the following 161-residue polypeptide: Nucleotide-binding protein lpl1175 (161 aa).

The protein belongs to the YajQ family.

Its function is as follows. Nucleotide-binding protein. The protein is Nucleotide-binding protein lpl1175 of Legionella pneumophila (strain Lens).